Reading from the N-terminus, the 1065-residue chain is NLR family CARD domain-containing protein 3 (1065 aa).

A compositionally biased stretch (basic and acidic residues) spans 1–10; the sequence is MRKQEVRTGR. Positions 1–62 are disordered; that stretch reads MRKQEVRTGR…PLGPCSNDSR (62 aa). One can recognise an NACHT domain in the interval 139–460; it reads RVSITIGVAG…YCFTHLSLQE (322 aa). 145-152 provides a ligand contact to ATP; it reads GVAGMGKT. A TRAF6-binding motif is present at residues 457 to 460; sequence SLQE. LRR repeat units lie at residues 617-639, 641-663, 665-688, 693-716, 721-744, 749-772, 777-800, 805-828, 833-856, 861-884, 889-912, 917-940, 945-968, 973-996, 1001-1029, and 1031-1052; these read EANL…LLYC, KLRL…VLSG, DCRI…ALAR, NRSL…ALAD, NRTL…SMAE, NRTL…RMAD, NRSL…ALAE, NQGL…ALMG, NQTL…AIAH, NSTL…AIAV, NRTL…ALGQ, NRSL…AVAR, NTAL…VLGE, NRTL…ALAN, NSSL…LSGN, and RLQH…MISE.

It belongs to the NLRP family. Directly interacts (via CARD) with TMEM173/STING; this interaction reduces TMEM173 trafficking to the perinuclear region in response to interferon stimulatory DNA. Also interacts, but to a lesser extent, with TBK1. Interacts with TRAF6; this interaction results in decreased TRAF6 'Lys-63'-linked polyubiquitination, but leaves 'Lys-48'-linked chains unchanged, promoting TRAF6 protein degradation. Interacts with PIK3R1/PIK3R2; this interaction disrupts the association between PIK3R1/PIK3R2 and the p110 catalytic subunit PIK3CA/PIK3CB/PIK3CD and reduces PIK3R1/PIK3R2 activation. Weakly interacts with PYCARD/ASC. Interacts with CASP1 and CASP5.

It is found in the cytoplasm. Negative regulator of the innate immune response. Attenuates signaling pathways activated by Toll-like receptors (TLRs) and the DNA sensor STING/TMEM173 in response to pathogen-associated molecular patterns, such as intracellular poly(dA:dT), but not poly(I:C), or in response to DNA virus infection, including that of Herpes simplex virus 1 (HSV1). May affect TLR4 signaling by acting at the level of TRAF6 ubiquitination, decreasing the activating 'Lys-63'-linked ubiquitination and leaving unchanged the degradative 'Lys-48'-linked ubiquitination. Inhibits the PI3K-AKT-mTOR pathway possibly by directly interacting with the posphatidylinositol 3-kinase regulatory subunit p85 (PIK3R1/PIK3R2) and disrupting the association between PIK3R1/PIK3R2 and the catalytic subunit p110 (PIK3CA/PIK3CB/PIK3CD) and reducing PIK3R1/PIK3R2 activation. Via its regulation of the PI3K-AKT-mTOR pathway, controls cell proliferation, predominantly in intestinal epithelial cells. May also affect NOD1- or NOD2-mediated NF-kappa-B activation. Might also affect the inflammatory response by preventing NLRP3 inflammasome formation, CASP1 cleavage and IL1B maturation. This Homo sapiens (Human) protein is NLR family CARD domain-containing protein 3 (NLRC3).